The following is a 290-amino-acid chain: MLARFPLYLRLVRMDKPIGSLLLLWPTLNALWIASDGRPRWPLVAIFALGTLLMRSAGCAMNDYADRDFDRHVKRTADRPLTSGKIRAWEAVAIAAVLSFVAFLLILPLNTLTKELSVVALFVAGSYPFMKRFFAIPQAYLGIAFGFGIPMAFAAVQGTVPALAWVMLVANVFWSVAYDTEYAMVDRDDDIKIGIRTSALTFGRFDVAAIMLCYAVTLGIYAWIGATLGFGLAFWAGWAAALGCALYHYTLIKDRERMPCFAAFRHNNWLGGVLFAGIAAHYLVAGAAGN.

Transmembrane regions (helical) follow at residues 41–61 (WPLV…GCAM), 89–109 (WEAV…ILPL), 133–153 (FFAI…PMAF), 158–178 (GTVP…SVAY), 202–224 (FGRF…YAWI), and 269–289 (WLGG…GAAG).

It belongs to the UbiA prenyltransferase family. It depends on Mg(2+) as a cofactor.

It is found in the cell inner membrane. It catalyses the reaction all-trans-octaprenyl diphosphate + 4-hydroxybenzoate = 4-hydroxy-3-(all-trans-octaprenyl)benzoate + diphosphate. The protein operates within cofactor biosynthesis; ubiquinone biosynthesis. Its function is as follows. Catalyzes the prenylation of para-hydroxybenzoate (PHB) with an all-trans polyprenyl group. Mediates the second step in the final reaction sequence of ubiquinone-8 (UQ-8) biosynthesis, which is the condensation of the polyisoprenoid side chain with PHB, generating the first membrane-bound Q intermediate 3-octaprenyl-4-hydroxybenzoate. The sequence is that of 4-hydroxybenzoate octaprenyltransferase from Burkholderia vietnamiensis (strain G4 / LMG 22486) (Burkholderia cepacia (strain R1808)).